A 440-amino-acid chain; its full sequence is Protein CANDIDATE G-PROTEIN COUPLED RECEPTOR 7 (440 aa).

The first 24 residues, 1–24, serve as a signal peptide directing secretion; the sequence is MAKMPLSVVVFLLFSAAFLAVSMA. N-linked (GlcNAc...) asparagine glycosylation is found at N124 and N162. The next 5 helical transmembrane spans lie at 175-195, 207-227, 243-263, 281-301, and 315-335; these read LPTL…FWSY, IHLL…CAAE, ILFY…IILI, VLII…VIGE, and VFLL…VWSI. An N-linked (GlcNAc...) asparagine glycan is attached at N351. 2 helical membrane-spanning segments follow: residues 363-383 and 390-410; these read IVVI…KTIA and VSFA…FHMF.

This sequence belongs to the LU7TM family.

It localises to the membrane. Functionally, plays a role in plants and microbes interactions. G-protein coupled receptor involved in root growth mediated by the bacterial quorum-sensing signals N-acyl-homoserine lactones (AHLs). This chain is Protein CANDIDATE G-PROTEIN COUPLED RECEPTOR 7, found in Arabidopsis thaliana (Mouse-ear cress).